Reading from the N-terminus, the 409-residue chain is Serine/threonine transporter SstT (409 aa).

9 helical membrane passes run 17–37 (LVGQ…FFPA), 49–69 (FVSA…MASI), 83–103 (ILLL…IASF), 142–162 (ALIS…GIAF), 180–200 (VSLI…GLVA), 218–238 (LVVL…LIVF), 301–321 (GAAI…GIAV), 331–351 (VVAS…LLLI), and 357–377 (LFGI…IIAI).

It belongs to the dicarboxylate/amino acid:cation symporter (DAACS) (TC 2.A.23) family.

It localises to the cell inner membrane. The enzyme catalyses L-serine(in) + Na(+)(in) = L-serine(out) + Na(+)(out). The catalysed reaction is L-threonine(in) + Na(+)(in) = L-threonine(out) + Na(+)(out). Functionally, involved in the import of serine and threonine into the cell, with the concomitant import of sodium (symport system). This is Serine/threonine transporter SstT from Pseudomonas aeruginosa (strain LESB58).